Reading from the N-terminus, the 1014-residue chain is Klotho (1014 aa).

Residues 1 to 35 form the signal peptide; it reads MPASAPPRRPRPPPPSLSLSLLLVLLGLAGRRLRA. Residues 36 to 983 are Extracellular-facing; sequence EPGDGAQTWA…ECSFFHTRKP (948 aa). 2 glycosyl hydrolase-1 regions span residues 59-508 and 517-955; these read FQGT…KNGF and LEGT…SNGF. N-linked (GlcNAc...) asparagine glycosylation is found at N161, N285, N346, N609, N614, and N696. A helical membrane pass occupies residues 984-1004; the sequence is LVAFIAFLFFAFIVSLSLIFY. Residues 1005-1014 lie on the Cytoplasmic side of the membrane; sequence YSKKGRRRYQ.

The protein belongs to the glycosyl hydrolase 1 family. Klotho subfamily. Homodimer. Interacts with FGF23 and FGFR1.

The protein localises to the cell membrane. It localises to the apical cell membrane. It is found in the secreted. It carries out the reaction a beta-D-glucuronoside + H2O = D-glucuronate + an alcohol. Functionally, may have weak glycosidase activity towards glucuronylated steroids. However, it lacks essential active site Glu residues at positions 241 and 874, suggesting it may be inactive as a glycosidase in vivo. May be involved in the regulation of calcium and phosphorus homeostasis by inhibiting the synthesis of active vitamin D. Essential factor for the specific interaction between FGF23 and FGFR1. Its function is as follows. The Klotho peptide generated by cleavage of the membrane-bound isoform may be an anti-aging circulating hormone which would extend life span by inhibiting insulin/IGF1 signaling. This chain is Klotho (KL), found in Macaca fascicularis (Crab-eating macaque).